We begin with the raw amino-acid sequence, 38 residues long: Large ribosomal subunit protein bL36 (38 aa).

This sequence belongs to the bacterial ribosomal protein bL36 family.

This chain is Large ribosomal subunit protein bL36, found in Limosilactobacillus fermentum (strain NBRC 3956 / LMG 18251) (Lactobacillus fermentum).